The following is a 530-amino-acid chain: Metal transporter Nramp2 (530 aa).

Residues 1-35 (MENDVKENLEEEEDRLLPPPPPSQSLPSTDSESEA) are disordered. 12 consecutive transmembrane segments (helical) span residues 68–88 (LWLF…PGNL), 96–116 (AIAG…GLLI), 153–173 (LALI…IQIL), 177–197 (FLPL…FLFL), 205–225 (LEAV…WMFG), 251–271 (AVGV…SALV), 297–317 (VALF…AKGF), 339–359 (FGGG…AAGQ), 395–415 (IVPT…LDVL), 418–438 (WLNV…LTLV), 456–476 (IAWT…LDFF), and 484–504 (LFGV…VYLI).

It belongs to the NRAMP (TC 2.A.55) family.

The protein localises to the membrane. Functionally, seems to be involved in iron uptake. The chain is Metal transporter Nramp2 (NRAMP2) from Arabidopsis thaliana (Mouse-ear cress).